The chain runs to 111 residues: FK506-binding protein 1 (111 aa).

Residues 1–20 (MGVEKTIITQGSGPSPQVGQ) form a disordered region. Residues 7–20 (IITQGSGPSPQVGQ) are compositionally biased toward polar residues. The PPIase FKBP-type domain occupies 19 to 111 (GQKVTMEYTG…IFDVELKKIG (93 aa)).

Belongs to the FKBP-type PPIase family. FKBP1 subfamily.

The protein resides in the cytoplasm. It carries out the reaction [protein]-peptidylproline (omega=180) = [protein]-peptidylproline (omega=0). Inhibited by both FK506 and rapamycin. Functionally, PPIases accelerate the folding of proteins. It catalyzes the cis-trans isomerization of proline imidic peptide bonds in oligopeptides. The polypeptide is FK506-binding protein 1 (FPR1) (Gibberella zeae (strain ATCC MYA-4620 / CBS 123657 / FGSC 9075 / NRRL 31084 / PH-1) (Wheat head blight fungus)).